The sequence spans 65 residues: MAKVRFKYKGEEKEVDTSKIKKVWRVGKMVSFTYDDNGKTGRGAVSEKDAPKELMDMLARAEKKK.

Lysine 7 bears the N6-methyllysine mark. An N6-methyllysine; partial mark is found at lysine 63 and lysine 64.

The protein belongs to the 7 kDa DNA-binding/endoribonuclease P2 family. In terms of assembly, monomer. Lys-63 was found to be 25% monomethylated and Lys-64 was found to be 36% monomethylated.

The protein localises to the cytoplasm. Can constrain negative DNA supercoils. May be involved in maintaining the integrity of the genome at high temperature. This Sulfolobus acidocaldarius (strain ATCC 33909 / DSM 639 / JCM 8929 / NBRC 15157 / NCIMB 11770) protein is DNA-binding protein 7e.